We begin with the raw amino-acid sequence, 345 residues long: Probable S-adenosylmethionine carrier 2, chloroplastic (345 aa).

Residues Met-1–Ser-31 constitute a chloroplast transit peptide. Solcar repeat units lie at residues Arg-76–Lys-148, Leu-157–Gly-239, and Glu-252–Ile-334. 5 consecutive transmembrane segments (helical) span residues Leu-82–Ile-102, Tyr-121–Val-141, Asn-156–Val-176, Ala-254–Ile-274, and Gly-309–Glu-329.

The protein belongs to the mitochondrial carrier (TC 2.A.29) family. In terms of tissue distribution, expressed at low levels in seedlings, leaves, flowers, stems and roots.

It localises to the plastid. Its subcellular location is the chloroplast membrane. Functionally, probable S-adenosylmethionine (SAM) transporter able to catalyze both uniport and exchange reactions through membranes. In Arabidopsis thaliana (Mouse-ear cress), this protein is Probable S-adenosylmethionine carrier 2, chloroplastic (SAMC2).